A 102-amino-acid polypeptide reads, in one-letter code: Small ribosomal subunit protein uS10 (102 aa).

Belongs to the universal ribosomal protein uS10 family. As to quaternary structure, part of the 30S ribosomal subunit.

Functionally, involved in the binding of tRNA to the ribosomes. The polypeptide is Small ribosomal subunit protein uS10 (Nocardioides sp. (strain ATCC BAA-499 / JS614)).